A 189-amino-acid chain; its full sequence is Ribosomal RNA large subunit methyltransferase E (189 aa).

5 residues coordinate S-adenosyl-L-methionine: glycine 45, phenylalanine 47, aspartate 64, aspartate 82, and aspartate 104. Lysine 144 acts as the Proton acceptor in catalysis.

It belongs to the class I-like SAM-binding methyltransferase superfamily. RNA methyltransferase RlmE family.

It is found in the cytoplasm. The catalysed reaction is uridine(2552) in 23S rRNA + S-adenosyl-L-methionine = 2'-O-methyluridine(2552) in 23S rRNA + S-adenosyl-L-homocysteine + H(+). Functionally, specifically methylates the uridine in position 2552 of 23S rRNA at the 2'-O position of the ribose in the fully assembled 50S ribosomal subunit. The sequence is that of Ribosomal RNA large subunit methyltransferase E from Borreliella afzelii (strain PKo) (Borrelia afzelii).